The sequence spans 258 residues: Imidazole glycerol phosphate synthase subunit HisF (258 aa).

Active-site residues include Asp11 and Asp130.

This sequence belongs to the HisA/HisF family. In terms of assembly, heterodimer of HisH and HisF.

It is found in the cytoplasm. It catalyses the reaction 5-[(5-phospho-1-deoxy-D-ribulos-1-ylimino)methylamino]-1-(5-phospho-beta-D-ribosyl)imidazole-4-carboxamide + L-glutamine = D-erythro-1-(imidazol-4-yl)glycerol 3-phosphate + 5-amino-1-(5-phospho-beta-D-ribosyl)imidazole-4-carboxamide + L-glutamate + H(+). It functions in the pathway amino-acid biosynthesis; L-histidine biosynthesis; L-histidine from 5-phospho-alpha-D-ribose 1-diphosphate: step 5/9. In terms of biological role, IGPS catalyzes the conversion of PRFAR and glutamine to IGP, AICAR and glutamate. The HisF subunit catalyzes the cyclization activity that produces IGP and AICAR from PRFAR using the ammonia provided by the HisH subunit. This is Imidazole glycerol phosphate synthase subunit HisF from Buchnera aphidicola subsp. Baizongia pistaciae (strain Bp).